We begin with the raw amino-acid sequence, 336 residues long: 3-isopropylmalate dehydrogenase (336 aa).

The substrate site is built by R86, R96, R117, and D201. The Mg(2+) site is built by D201, D225, and D229. NAD(+) is bound at residue G258–N270.

Belongs to the isocitrate and isopropylmalate dehydrogenases family. In terms of assembly, homotetramer. Mg(2+) serves as cofactor. The cofactor is Mn(2+).

It is found in the cytoplasm. The enzyme catalyses (2R,3S)-3-isopropylmalate + NAD(+) = 4-methyl-2-oxopentanoate + CO2 + NADH. It participates in amino-acid biosynthesis; L-leucine biosynthesis; L-leucine from 3-methyl-2-oxobutanoate: step 3/4. Functionally, catalyzes the oxidation of 3-carboxy-2-hydroxy-4-methylpentanoate (3-isopropylmalate) to 3-carboxy-4-methyl-2-oxopentanoate. The product decarboxylates to 4-methyl-2 oxopentanoate. In Saccharolobus solfataricus (strain ATCC 35092 / DSM 1617 / JCM 11322 / P2) (Sulfolobus solfataricus), this protein is 3-isopropylmalate dehydrogenase (leuB).